A 91-amino-acid chain; its full sequence is Sm-like protein LSM36B (91 aa).

Positions 14–86 constitute a Sm domain; the sequence is TPADFLKSIR…VLYISTTKGT (73 aa).

It belongs to the snRNP Sm proteins family. Component of the heptameric LSM1-LSM7 complex that forms a seven-membered ring structure with a donut shape. The LSM subunits are arranged in the order LSM1, LSM2, LSM3, LSM6, LSM5, LSM7 and LSM4. Component of the heptameric LSM2-LSM8 complex that forms a seven-membered ring structure with a donut shape. The LSM subunits are arranged in the order LSM8, LSM2, LSM3, LSM6, LSM5, LSM7 and LSM4. LSM6B subunit interacts only with its two neighboring subunits, LSM3A or LSM3B and LSM5. In terms of tissue distribution, expressed in roots, leaves, stems, flowers and siliques.

It is found in the cytoplasm. Its subcellular location is the nucleus. Functionally, component of LSM protein complexes, which are involved in RNA processing. Component of the cytoplasmic LSM1-LSM7 complex which is involved in mRNA degradation by promoting decapping and leading to accurate 5'-3' mRNA decay. The cytoplasmic LSM1-LSM7 complex regulates developmental gene expression by the decapping of specific development-related transcripts. Component of the nuclear LSM2-LSM8 complex which is involved splicing nuclear mRNAs. LSM2-LSM8 binds directly to the U6 small nuclear RNAs (snRNAs) and is essential for accurate splicing of selected development-related mRNAs through the stabilization of the spliceosomal U6 snRNA. Plays a critical role in the regulation of development-related gene expression. This Arabidopsis thaliana (Mouse-ear cress) protein is Sm-like protein LSM36B.